The chain runs to 292 residues: MFTGSIVALVTPMDEKGAIDRVSLKKLIDYHVASGTAAIVAVGTTGETSTLSHEEHGDVVMWTLELSDGRVPVIAGTGANSTSEAVSLTRRFNDSGVVGCLSVTPYYNRPSQEGLFQHFRAIAERSDLPQILYNVPARTGCDMLPPTVARLAEIKNIIGIKEATGNLSRVSQIQELVNDDFLLLSGDDASALDFIQLGGKGVISVTANVAAKEMAQLCALAADGNYADARRLNQRLMPLHQKLFFEPSPIPVKWACKALGLMATDTLRLPMTPLTRAGSRVVRQALTDAGLL.

Position 45 (T45) interacts with pyruvate. Y133 (proton donor/acceptor) is an active-site residue. The Schiff-base intermediate with substrate role is filled by K161. I203 contributes to the pyruvate binding site.

The protein belongs to the DapA family. In terms of assembly, homotetramer; dimer of dimers.

Its subcellular location is the cytoplasm. The enzyme catalyses L-aspartate 4-semialdehyde + pyruvate = (2S,4S)-4-hydroxy-2,3,4,5-tetrahydrodipicolinate + H2O + H(+). It functions in the pathway amino-acid biosynthesis; L-lysine biosynthesis via DAP pathway; (S)-tetrahydrodipicolinate from L-aspartate: step 3/4. Functionally, catalyzes the condensation of (S)-aspartate-beta-semialdehyde [(S)-ASA] and pyruvate to 4-hydroxy-tetrahydrodipicolinate (HTPA). This is 4-hydroxy-tetrahydrodipicolinate synthase from Sodalis glossinidius (strain morsitans).